A 149-amino-acid polypeptide reads, in one-letter code: 3-hydroxyacyl-[acyl-carrier-protein] dehydratase FabZ (149 aa).

The active site involves His53.

This sequence belongs to the thioester dehydratase family. FabZ subfamily.

It localises to the cytoplasm. It carries out the reaction a (3R)-hydroxyacyl-[ACP] = a (2E)-enoyl-[ACP] + H2O. Involved in unsaturated fatty acids biosynthesis. Catalyzes the dehydration of short chain beta-hydroxyacyl-ACPs and long chain saturated and unsaturated beta-hydroxyacyl-ACPs. The chain is 3-hydroxyacyl-[acyl-carrier-protein] dehydratase FabZ from Neisseria gonorrhoeae (strain ATCC 700825 / FA 1090).